A 430-amino-acid polypeptide reads, in one-letter code: Purine nucleoside phosphorylase LACC1 (430 aa).

Lys247 carries the N6-acetyllysine modification. Zn(2+) is bound by residues His250, Cys284, and His301.

It belongs to the purine nucleoside phosphorylase YfiH/LACC1 family. Interacts with FASN. Interacts with SDHA. Interacts with ATF6, EIF2AK3 and ERN1. Post-translationally, phosphorylated on tyrosine residues. Predominantly expressed in myeloid cells. Highly expressed in primary macrophages and dendritic cells sorted from the peritoneum or spleen, respectively (at protein level).

The protein localises to the cytoplasm. Its subcellular location is the nucleus. The protein resides in the endoplasmic reticulum. It localises to the peroxisome. The enzyme catalyses adenosine + phosphate = alpha-D-ribose 1-phosphate + adenine. It catalyses the reaction inosine + phosphate = alpha-D-ribose 1-phosphate + hypoxanthine. It carries out the reaction guanosine + phosphate = alpha-D-ribose 1-phosphate + guanine. The catalysed reaction is S-methyl-5'-thioadenosine + phosphate = 5-(methylsulfanyl)-alpha-D-ribose 1-phosphate + adenine. The enzyme catalyses adenosine + H2O + H(+) = inosine + NH4(+). Purine nucleoside enzyme that catalyzes the phosphorolysis of adenosine, guanosine and inosine nucleosides, yielding D-ribose 1-phosphate and the respective free bases, adenine, guanine and hypoxanthine. Also catalyzes the phosphorolysis of S-methyl-5'-thioadenosine into adenine and S-methyl-5-thio-alpha-D-ribose 1-phosphate. Also has adenosine deaminase activity. Acts as a regulator of innate immunity in macrophages by modulating the purine nucleotide metabolism, thereby regulating the metabolic function and bioenergetic state of macrophages. Enables a purine nucleotide cycle between adenosine and inosine monophosphate and adenylosuccinate that prevents cytoplasmic acidification and balances the cytoplasmic-mitochondrial redox interface. The purine nucleotide cycle consumes aspartate and releases fumarate in a manner involving fatty acid oxidation and ATP-citrate lyase activity. Participates in pattern recognition receptor-induced cytokines in macrophages: associates with the NOD2-signaling complex and promotes optimal NOD2-induced signaling, cytokine secretion and bacterial clearance. Localizes to the endoplasmic reticulum upon PRR stimulation of macrophages and associates with endoplasmic reticulum-stress sensors, promoting the endoplasmic reticulum unfolded protein response (UPR). Does not show laccase activity. This is Purine nucleoside phosphorylase LACC1 from Mus musculus (Mouse).